Consider the following 444-residue polypeptide: MTLDLSKPATAGYLSGFGNEFATEALPGALPHGRNSPQRAPYGLYAEQLSGTAFTAPRGHNRRAWLYRIRPAAVHRPFEPFTGRQRLVAEFGDSADVPPTPPNQLRWDPLPMPVEPTDFVEGLVTMAGNGSAAAMNGCAIHLYAANRSMQDRFFYSADGELLIVPQQGRLFIATEFGRLDVEPAEIAVIPRGVRFAVALPDGDARGYICENFGALLRLPDLGPIGSNGLANPRDFLTPQAAYEDREGAFELIAKLNGRLWRADIGHSPFDVVAWHGNYAPYKYDLRLFNTIGSISYDHPDPSIFLVLQSQSDSPGVDAIDFVIFPPRWLAAEDTFRPPWFHRNVASEFMGLVHGAYDAKAEGFVPGGASLHNCMSGHGPDADTFEKASAIDTTRPHKVDATMAFMFETRTLIRPTRYALDTAQLQADYFECWQRIEKHFNPEQR.

Residues 92-111 (GDSADVPPTPPNQLRWDPLP) are disordered. The active-site Proton acceptor is the histidine 298. Fe cation-binding residues include histidine 341 and glutamate 347. Residues tyrosine 356 and histidine 377 each coordinate homogentisate. Position 377 (histidine 377) interacts with Fe cation.

This sequence belongs to the homogentisate dioxygenase family. As to quaternary structure, hexamer; dimer of trimers. The cofactor is Fe cation.

It carries out the reaction homogentisate + O2 = 4-maleylacetoacetate + H(+). It participates in amino-acid degradation; L-phenylalanine degradation; acetoacetate and fumarate from L-phenylalanine: step 4/6. Its function is as follows. Involved in the catabolism of homogentisate (2,5-dihydroxyphenylacetate or 2,5-OH-PhAc), a central intermediate in the degradation of phenylalanine and tyrosine. Catalyzes the oxidative ring cleavage of the aromatic ring of homogentisate to yield maleylacetoacetate. The sequence is that of Homogentisate 1,2-dioxygenase from Burkholderia vietnamiensis (strain G4 / LMG 22486) (Burkholderia cepacia (strain R1808)).